We begin with the raw amino-acid sequence, 654 residues long: Fructose-1,6-bisphosphatase class 3 (654 aa).

The tract at residues 288 to 307 (NPAFKPKKRPDKHERLTQRE) is disordered. Over residues 298 to 307 (DKHERLTQRE) the composition is skewed to basic and acidic residues.

Belongs to the FBPase class 3 family. Mn(2+) is required as a cofactor.

The catalysed reaction is beta-D-fructose 1,6-bisphosphate + H2O = beta-D-fructose 6-phosphate + phosphate. It participates in carbohydrate biosynthesis; gluconeogenesis. In Staphylococcus aureus (strain MRSA252), this protein is Fructose-1,6-bisphosphatase class 3.